Consider the following 104-residue polypeptide: Small ribosomal subunit protein uS10 (104 aa).

Belongs to the universal ribosomal protein uS10 family. In terms of assembly, part of the 30S ribosomal subunit.

Involved in the binding of tRNA to the ribosomes. The protein is Small ribosomal subunit protein uS10 of Hydrogenobaculum sp. (strain Y04AAS1).